The sequence spans 127 residues: Urotensin-2 (127 aa).

Residues 1–16 (MSKLFFCCLILAGSFC) form the signal peptide. Residues 17-111 (SFRSLPIIVP…RLQSKDRKQF (95 aa)) constitute a propeptide that is removed on maturation. A disulfide bridge links C121 with C126.

Belongs to the urotensin-2 family. As to expression, central nervous system. Spinal cord.

It localises to the secreted. Involved in smooth muscle stimulating and ion mobilizing activities. It has a suggested role as a corticotropin-releasing factor. This Pelophylax ridibundus (Marsh frog) protein is Urotensin-2 (UTS2).